We begin with the raw amino-acid sequence, 460 residues long: Cell death abnormality protein 8 (460 aa).

At Met-1–Cys-45 the chain is on the cytoplasmic side. A helical membrane pass occupies residues Phe-46–Phe-66. At His-67–Ala-77 the chain is on the extracellular side. A helical membrane pass occupies residues Leu-78–Met-98. Topologically, residues Leu-99–Arg-123 are cytoplasmic. The helical transmembrane segment at Phe-124–Tyr-144 threads the bilayer. The Extracellular segment spans residues Tyr-145 to Trp-219. Residues Leu-220–Val-240 traverse the membrane as a helical segment. Over Gln-241–Arg-274 the chain is Cytoplasmic. Residues Ile-275–Gly-295 traverse the membrane as a helical segment. At His-296–Lys-320 the chain is on the extracellular side. A helical transmembrane segment spans residues Leu-321 to Asn-341. At Thr-342–Glu-353 the chain is on the cytoplasmic side. A helical transmembrane segment spans residues Phe-354–Ile-374. Over Glu-375–Arg-378 the chain is Extracellular. The chain crosses the membrane as a helical span at residues Ile-379–Phe-399. Residues His-400–Asn-460 are Cytoplasmic-facing.

It belongs to the XK family. Post-translationally, cleavage by ced-3 activates ced-8 function in promoting phosphatidylserine exposure at the surface of apoptotic cells.

Its subcellular location is the cell membrane. Acts downstream of ced-9 and caspase ced-3 to promote phosphatidylserine exposure on apoptotic cell surface, possibly by mediating phospholipid scrambling. Phosphatidylserine is a specific marker only present at the surface of apoptotic cells and acts as a specific signal for engulfment. Regulates apoptosis kinetics during embryonic development. Not required for engulfment of germ cell corpses. The protein is Cell death abnormality protein 8 of Caenorhabditis briggsae.